Here is a 1106-residue protein sequence, read N- to C-terminus: GYF domain-containing protein gyf-1 (1106 aa).

Residues 1–17 are compositionally biased toward polar residues; that stretch reads MSSVSSAEPTAQQNFNP. Disordered stretches follow at residues 1–50, 160–370, and 383–434; these read MSSV…GGFD, GALQ…DSTV, and KAST…SAWS. A compositionally biased stretch (low complexity) spans 30-42; sequence RGGSISSGNNRSS. Residues 162 to 180 are compositionally biased toward polar residues; the sequence is LQNGQSPTSRWAPKSSWNK. Positions 207–224 are enriched in gly residues; sequence GRGGGRIGGENGFGGATN. The segment covering 229–243 has biased composition (polar residues); it reads AAQNEDSPGTYQSKF. A compositionally biased stretch (gly residues) spans 248-261; that stretch reads RGGGAGSVGRGGST. Residues 306–322 show a composition bias toward polar residues; that stretch reads VGSTSRTSTNAAPQSSE. Composition is skewed to low complexity over residues 334–353 and 390–410; these read QRTQ…QQAQ and PPQQ…APSR. Residues 459-508 enclose the GYF domain; it reads PVQFYYMDPTETRRGPFPKDQMNVWFKAGYFTDESLRVQRGENGEYKTIG. Positions 584-746 form a coiled coil; the sequence is LDDHNRRLAE…ERKRAAERER (163 aa). Disordered regions lie at residues 778 to 811, 909 to 928, 1026 to 1076, and 1087 to 1106; these read AFTG…KTAP, KNSQ…SAKV, AGGR…DGNI, and RLNK…PSRR. Polar residues predominate over residues 786 to 801; the sequence is VSPSGSEESDEWISTS. Over residues 1046 to 1057 the composition is skewed to low complexity; that stretch reads SDSNSGSNSNSG.

The chain is GYF domain-containing protein gyf-1 from Caenorhabditis elegans.